Reading from the N-terminus, the 294-residue chain is Cuticle collagen 144 (294 aa).

Positions 1 to 30 (MEKILVTISTGAASFAVLAVLFTIPSLYNT) are cleaved as a signal peptide. Positions 100–112 (TCPPGPPGPPGQP) are enriched in pro residues. Disordered regions lie at residues 100–134 (TCPP…TYAP) and 148–278 (PQGP…GNDA). 2 triple-helical region regions span residues 102-127 (PPGP…KGED) and 153-274 (GPEG…PGLP). 2 stretches are compositionally biased toward low complexity: residues 164 to 209 (AGPD…PGQD) and 219 to 265 (APGA…DGQP).

As to quaternary structure, collagen polypeptide chains are complexed within the cuticle by disulfide bonds and other types of covalent cross-links.

Nematode cuticles are composed largely of collagen-like proteins. The cuticle functions both as an exoskeleton and as a barrier to protect the worm from its environment. The chain is Cuticle collagen 144 from Caenorhabditis briggsae.